The chain runs to 248 residues: MGYNKSLRYSRHDGTSCVIDNHHLKSLGAVLNDVRRKKDRIREAEYEPIIDIADQYMVTEDPFRGPGKNVRITLFKEIRRVHPDTMKLVCNWSGKEFLRETWTRFISEEFPITTDQEIMDLWFELQLRPMHPNRCYKFTMQYALGAHPDYVAHDVIRQQDPYYVGPNNIERINLSKKGFAFPLTCLQSVYNDNFERFFDDVLWPYFYRPLVYVGTTSAEIEEIMIEVSLLFKIKEFAPDVPLFTGPAY.

This sequence belongs to the polyhedrin family.

Functionally, component of the virus occlusion bodies, which are large proteinaceous structures, that protect the virus from the outside environment for extended periods until they are ingested by insect larvae. This chain is Granulin, found in Cydia pomonella (Codling moth).